Reading from the N-terminus, the 257-residue chain is Gene 3 protein (257 aa).

The segment covering 163–176 has biased composition (polar residues); that stretch reads STENLLGQTQSSTH. The segment at 163 to 257 is disordered; that stretch reads STENLLGQTQ…SDSSVSSVFF (95 aa). Basic and acidic residues predominate over residues 214-240; the sequence is SIREETVSGMARAREECNSPSEHDRLT.

In Equine herpesvirus 1 (strain Ab4p) (EHV-1), this protein is Gene 3 protein.